The primary structure comprises 854 residues: Glucans biosynthesis glucosyltransferase H (854 aa).

7 helical membrane passes run isoleucine 155–leucine 175, isoleucine 209–methionine 229, valine 528–leucine 548, isoleucine 583–leucine 603, phenylalanine 619–phenylalanine 639, phenylalanine 671–leucine 691, and phenylalanine 695–tyrosine 715.

It belongs to the glycosyltransferase 2 family. OpgH subfamily.

The protein resides in the cell inner membrane. It participates in glycan metabolism; osmoregulated periplasmic glucan (OPG) biosynthesis. Its function is as follows. Involved in the biosynthesis of osmoregulated periplasmic glucans (OPGs). This Pectobacterium carotovorum subsp. carotovorum (strain PC1) protein is Glucans biosynthesis glucosyltransferase H.